We begin with the raw amino-acid sequence, 157 residues long: Ribosomal RNA large subunit methyltransferase H (157 aa).

S-adenosyl-L-methionine-binding positions include L73, G104, and 123-128 (LGPLTL).

It belongs to the RNA methyltransferase RlmH family. As to quaternary structure, homodimer.

Its subcellular location is the cytoplasm. The catalysed reaction is pseudouridine(1915) in 23S rRNA + S-adenosyl-L-methionine = N(3)-methylpseudouridine(1915) in 23S rRNA + S-adenosyl-L-homocysteine + H(+). Specifically methylates the pseudouridine at position 1915 (m3Psi1915) in 23S rRNA. This is Ribosomal RNA large subunit methyltransferase H from Xylella fastidiosa (strain M12).